Reading from the N-terminus, the 388-residue chain is Succinate--CoA ligase [ADP-forming] subunit beta (388 aa).

Residues 9-244 (KALFAEYGLP…PSQDDAREAH (236 aa)) form the ATP-grasp domain. Residues K46, 53–55 (GRG), E99, T102, and E107 contribute to the ATP site. Residues N199 and D213 each coordinate Mg(2+). Substrate is bound by residues N264 and 321–323 (GIV).

It belongs to the succinate/malate CoA ligase beta subunit family. In terms of assembly, heterotetramer of two alpha and two beta subunits. Mg(2+) is required as a cofactor.

The catalysed reaction is succinate + ATP + CoA = succinyl-CoA + ADP + phosphate. It carries out the reaction GTP + succinate + CoA = succinyl-CoA + GDP + phosphate. It functions in the pathway carbohydrate metabolism; tricarboxylic acid cycle; succinate from succinyl-CoA (ligase route): step 1/1. In terms of biological role, succinyl-CoA synthetase functions in the citric acid cycle (TCA), coupling the hydrolysis of succinyl-CoA to the synthesis of either ATP or GTP and thus represents the only step of substrate-level phosphorylation in the TCA. The beta subunit provides nucleotide specificity of the enzyme and binds the substrate succinate, while the binding sites for coenzyme A and phosphate are found in the alpha subunit. In Shewanella loihica (strain ATCC BAA-1088 / PV-4), this protein is Succinate--CoA ligase [ADP-forming] subunit beta.